Consider the following 127-residue polypeptide: Major sperm protein 63 (127 aa).

A2 is subject to N-acetylalanine. The 118-residue stretch at 9-126 (DIQTQPGTKI…RRKNLPIEYN (118 aa)) folds into the MSP domain.

Sperm.

The protein localises to the cell projection. The protein resides in the pseudopodium. Its subcellular location is the cytoplasm. It is found in the cytoskeleton. Its function is as follows. Central component in molecular interactions underlying sperm crawling. Forms an extensive filament system that extends from sperm villipoda, along the leading edge of the pseudopod. The polypeptide is Major sperm protein 63 (msp-63) (Caenorhabditis elegans).